The sequence spans 189 residues: Elongation factor P (189 aa).

An N6-(3,6-diaminohexanoyl)-5-hydroxylysine modification is found at K34.

Belongs to the elongation factor P family. May be beta-lysylated on the epsilon-amino group of Lys-34 by the combined action of EpmA and EpmB, and then hydroxylated on the C5 position of the same residue by EpmC (if this protein is present). Lysylation is critical for the stimulatory effect of EF-P on peptide-bond formation. The lysylation moiety may extend toward the peptidyltransferase center and stabilize the terminal 3-CCA end of the tRNA. Hydroxylation of the C5 position on Lys-34 may allow additional potential stabilizing hydrogen-bond interactions with the P-tRNA.

The protein resides in the cytoplasm. Its pathway is protein biosynthesis; polypeptide chain elongation. Involved in peptide bond synthesis. Alleviates ribosome stalling that occurs when 3 or more consecutive Pro residues or the sequence PPG is present in a protein, possibly by augmenting the peptidyl transferase activity of the ribosome. Modification of Lys-34 is required for alleviation. In Dichelobacter nodosus (strain VCS1703A), this protein is Elongation factor P.